The following is a 210-amino-acid chain: Uridine kinase (210 aa).

An ATP-binding site is contributed by glycine 13–threonine 20.

This sequence belongs to the uridine kinase family.

It localises to the cytoplasm. It carries out the reaction uridine + ATP = UMP + ADP + H(+). The catalysed reaction is cytidine + ATP = CMP + ADP + H(+). It participates in pyrimidine metabolism; CTP biosynthesis via salvage pathway; CTP from cytidine: step 1/3. Its pathway is pyrimidine metabolism; UMP biosynthesis via salvage pathway; UMP from uridine: step 1/1. The protein is Uridine kinase of Oceanobacillus iheyensis (strain DSM 14371 / CIP 107618 / JCM 11309 / KCTC 3954 / HTE831).